The following is a 156-amino-acid chain: MKLQLVAVGTKMPDWVQTGFIDYLRRFPKDMPFDLVEIPAGKRGKNADIKRILEKEGELMLAAVGKNNRIVTLDIPGTLWETPQLAQQLERWKQDGRDVSLLIGGPEGLAQACKAAAEQSWSLSPLTLPHPLVRVLVAESLYRAWSITTNHPYHRE.

Residues Leu73, Gly104, and 123–128 (LSPLTL) contribute to the S-adenosyl-L-methionine site.

The protein belongs to the RNA methyltransferase RlmH family. In terms of assembly, homodimer.

Its subcellular location is the cytoplasm. The enzyme catalyses pseudouridine(1915) in 23S rRNA + S-adenosyl-L-methionine = N(3)-methylpseudouridine(1915) in 23S rRNA + S-adenosyl-L-homocysteine + H(+). Specifically methylates the pseudouridine at position 1915 (m3Psi1915) in 23S rRNA. This chain is Ribosomal RNA large subunit methyltransferase H, found in Yersinia enterocolitica serotype O:8 / biotype 1B (strain NCTC 13174 / 8081).